Consider the following 173-residue polypeptide: Glycine cleavage system H protein, mitochondrial (173 aa).

A mitochondrion-targeting transit peptide spans 1–48; sequence MALRVVRSVRALLCTLRAVPSPAAPCPPRPWQLGVGAVRTLRTGPALL. In terms of domain architecture, Lipoyl-binding spans 66 to 148; sequence IGTVGISNFA…YEDGWLIKMT (83 aa). At Lys-107 the chain carries N6-lipoyllysine.

The protein belongs to the GcvH family. As to quaternary structure, interacts with GLDC. The glycine cleavage system is composed of four proteins: P (GLDC), T (GCST), L (DLD) and H (GCSH). The cofactor is (R)-lipoate.

It is found in the mitochondrion. Its function is as follows. The glycine cleavage system catalyzes the degradation of glycine. The H protein (GCSH) shuttles the methylamine group of glycine from the P protein (GLDC) to the T protein (GCST). Has a pivotal role in the lipoylation of enzymes involved in cellular energetics such as the mitochondrial dihydrolipoyllysine-residue acetyltransferase component of pyruvate dehydrogenase complex (DLAT), and the mitochondrial dihydrolipoyllysine-residue succinyltransferase component of 2-oxoglutarate dehydrogenase complex (DLST). This Homo sapiens (Human) protein is Glycine cleavage system H protein, mitochondrial.